A 133-amino-acid polypeptide reads, in one-letter code: Ribonucleases P/MRP protein subunit POP8 (133 aa).

Component of nuclear RNase P and RNase MRP complexes. RNase P consists of an RNA moiety and at least 9 protein subunits including POP1, POP3, POP4, POP5, POP6, POP7, POP8, RPP1 and RPR2. RNase MRP complex consists of an RNA moiety and at least 10 protein subunits including POP1, POP3, POP4, POP5, POP6, POP7, POP8, RMP1, RPP1 and SNM1, many of which are shared with the RNase P complex.

It localises to the nucleus. It catalyses the reaction Endonucleolytic cleavage of RNA, removing 5'-extranucleotides from tRNA precursor.. Its function is as follows. Component of ribonuclease P, a protein complex that generates mature tRNA molecules by cleaving their 5'-ends. Also a component of RNase MRP, which cleaves pre-rRNA sequences. This is Ribonucleases P/MRP protein subunit POP8 (POP8) from Saccharomyces cerevisiae (strain ATCC 204508 / S288c) (Baker's yeast).